The chain runs to 386 residues: 3-hydroxyisobutyryl-CoA hydrolase, mitochondrial (386 aa).

The transit peptide at 1–32 directs the protein to the mitochondrion; that stretch reads MGQREMWRLMSRFNAFKRTNTILHHLRMSKHT. 2 positions are modified to N6-acetyllysine; alternate: Lys-55 and Lys-92. Residues Lys-55 and Lys-92 each carry the N6-succinyllysine; alternate modification. Substrate contacts are provided by Glu-121, Gly-146, Glu-169, and Asp-177. An N6-acetyllysine; alternate modification is found at Lys-221. Lys-221 carries the post-translational modification N6-succinyllysine; alternate. At Ser-234 the chain carries Phosphoserine. N6-succinyllysine is present on Lys-257. Position 297 is an N6-acetyllysine; alternate (Lys-297). Lys-297 is modified (N6-succinyllysine; alternate). Position 301 is an N6-succinyllysine (Lys-301). N6-acetyllysine; alternate is present on Lys-353. N6-succinyllysine; alternate is present on Lys-353. Ser-356 bears the Phosphoserine mark. N6-acetyllysine occurs at positions 360 and 365. Lys-377 is modified (N6-succinyllysine).

Belongs to the enoyl-CoA hydratase/isomerase family. Highly expressed in liver and kidney, also detected in heart, muscle and brain (at protein level). Not detected in lung.

It localises to the mitochondrion. It carries out the reaction 3-hydroxy-2-methylpropanoyl-CoA + H2O = 3-hydroxy-2-methylpropanoate + CoA + H(+). It participates in amino-acid degradation; L-valine degradation. In terms of biological role, hydrolyzes 3-hydroxyisobutyryl-CoA (HIBYL-CoA), a saline catabolite. Has high activity toward isobutyryl-CoA. Could be an isobutyryl-CoA dehydrogenase that functions in valine catabolism. Also hydrolyzes 3-hydroxypropanoyl-CoA. The polypeptide is 3-hydroxyisobutyryl-CoA hydrolase, mitochondrial (HIBCH) (Homo sapiens (Human)).